Here is a 541-residue protein sequence, read N- to C-terminus: Chaperonin GroEL, cyanelle (541 aa).

Residues 29–32, 86–90, G413, 479–481, and D495 contribute to the ATP site; these read TLGP, DGTTT, and NAA.

This sequence belongs to the chaperonin (HSP60) family. In terms of assembly, forms a cylinder of 14 subunits composed of two heptameric rings stacked back-to-back. Interacts with the co-chaperonin GroES.

It localises to the plastid. Its subcellular location is the cyanelle. It carries out the reaction ATP + H2O + a folded polypeptide = ADP + phosphate + an unfolded polypeptide.. Together with its co-chaperonin GroES, plays an essential role in assisting protein folding. The GroEL-GroES system forms a nano-cage that allows encapsulation of the non-native substrate proteins and provides a physical environment optimized to promote and accelerate protein folding. This is Chaperonin GroEL, cyanelle from Cyanophora paradoxa.